Consider the following 235-residue polypeptide: uncharacterized protein (235 aa).

This is an uncharacterized protein from Salmonella typhimurium (strain LT2 / SGSC1412 / ATCC 700720).